The sequence spans 156 residues: Small ribosomal subunit protein uS7 (156 aa).

Belongs to the universal ribosomal protein uS7 family. Part of the 30S ribosomal subunit. Contacts proteins S9 and S11.

Its function is as follows. One of the primary rRNA binding proteins, it binds directly to 16S rRNA where it nucleates assembly of the head domain of the 30S subunit. Is located at the subunit interface close to the decoding center, probably blocks exit of the E-site tRNA. In Myxococcus xanthus (strain DK1622), this protein is Small ribosomal subunit protein uS7.